A 176-amino-acid polypeptide reads, in one-letter code: MADITEYLERSMQNCSLIDRRSSMGDGFGMSDEHIPISDRFLELSSHFSVPSHLEQCLDLKTGEIYYRSWNSGMRVKEDPRKSMSRGNYADQSSGESSGTVFSSEEVSSYYESEESSSESSPSSRKYHKEEQDEDVLVVAGCKACLMYFMVPKLFKDCPKCATQLLHFDQLHSTSP.

The EAR signature appears at Phe-41 to Ser-46. The WW domain maps to Phe-48–Lys-82. Disordered stretches follow at residues Lys-77 to Glu-106 and Tyr-111 to Glu-130. Over residues Ser-93–Glu-106 the composition is skewed to low complexity.

In terms of assembly, may interact with BHLH122/CFLAP1 and BHLH80/CFLAP2.

Its function is as follows. May negatively regulate the cuticle development by interacting with the HD-ZIP IV transcription factor HDG1. The polypeptide is Protein CURLY FLAG LEAF 2 (Arabidopsis thaliana (Mouse-ear cress)).